The sequence spans 64 residues: Toxin Tce3 (64 aa).

The LCN-type CS-alpha/beta domain occupies 1–62 (KDGYIIEHRG…IFDSNNNKCS (62 aa)). 4 cysteine pairs are disulfide-bonded: Cys11–Cys61, Cys15–Cys37, Cys23–Cys42, and Cys27–Cys44.

It belongs to the long (4 C-C) scorpion toxin superfamily. Sodium channel inhibitor family. Beta subfamily. Expressed by the venom gland.

The protein localises to the secreted. Its function is as follows. Inhibits the sodium (Nav) currents in an apparent irreversible manner. Produces small depolarization and induces repetitive firing in squid axons. Is specific for arthropods (crickets, triatomides, crabs and squids), but is non-toxic to mice. Shows antibacterial activity against both Gram-positive and Gram-negative bacteria. This Tityus cerroazul (Scorpion) protein is Toxin Tce3.